Reading from the N-terminus, the 193-residue chain is dTTP/UTP pyrophosphatase (193 aa).

The active-site Proton acceptor is the Asp-77.

This sequence belongs to the Maf family. YhdE subfamily. A divalent metal cation is required as a cofactor.

The protein localises to the cytoplasm. The catalysed reaction is dTTP + H2O = dTMP + diphosphate + H(+). It catalyses the reaction UTP + H2O = UMP + diphosphate + H(+). In terms of biological role, nucleoside triphosphate pyrophosphatase that hydrolyzes dTTP and UTP. May have a dual role in cell division arrest and in preventing the incorporation of modified nucleotides into cellular nucleic acids. This is dTTP/UTP pyrophosphatase from Phocaeicola vulgatus (strain ATCC 8482 / DSM 1447 / JCM 5826 / CCUG 4940 / NBRC 14291 / NCTC 11154) (Bacteroides vulgatus).